The sequence spans 170 residues: Cyclic pyranopterin monophosphate synthase (170 aa).

Residues 75 to 77 (MCH) and 115 to 116 (ME) each bind substrate. Aspartate 130 is an active-site residue.

The protein belongs to the MoaC family. Homohexamer; trimer of dimers.

It carries out the reaction (8S)-3',8-cyclo-7,8-dihydroguanosine 5'-triphosphate = cyclic pyranopterin phosphate + diphosphate. The protein operates within cofactor biosynthesis; molybdopterin biosynthesis. Functionally, catalyzes the conversion of (8S)-3',8-cyclo-7,8-dihydroguanosine 5'-triphosphate to cyclic pyranopterin monophosphate (cPMP). The polypeptide is Cyclic pyranopterin monophosphate synthase (Bacillus velezensis (strain DSM 23117 / BGSC 10A6 / LMG 26770 / FZB42) (Bacillus amyloliquefaciens subsp. plantarum)).